The chain runs to 52 residues: ATP synthase F(0) complex subunit 8 (52 aa).

The chain crosses the membrane as a helical span at residues 10–30; the sequence is LMTHLWAWLMLYLTTQKIKTF.

The protein belongs to the ATPase protein 8 family. In terms of assembly, component of the ATP synthase complex composed at least of ATP5F1A/subunit alpha, ATP5F1B/subunit beta, ATP5MC1/subunit c (homooctomer), MT-ATP6/subunit a, MT-ATP8/subunit 8, ATP5ME/subunit e, ATP5MF/subunit f, ATP5MG/subunit g, ATP5MK/subunit k, ATP5MJ/subunit j, ATP5F1C/subunit gamma, ATP5F1D/subunit delta, ATP5F1E/subunit epsilon, ATP5PF/subunit F6, ATP5PB/subunit b, ATP5PD/subunit d, ATP5PO/subunit OSCP. ATP synthase complex consists of a soluble F(1) head domain (subunits alpha(3) and beta(3)) - the catalytic core - and a membrane F(0) domain - the membrane proton channel (subunits c, a, 8, e, f, g, k and j). These two domains are linked by a central stalk (subunits gamma, delta, and epsilon) rotating inside the F1 region and a stationary peripheral stalk (subunits F6, b, d, and OSCP).

It localises to the mitochondrion membrane. Its function is as follows. Subunit 8, of the mitochondrial membrane ATP synthase complex (F(1)F(0) ATP synthase or Complex V) that produces ATP from ADP in the presence of a proton gradient across the membrane which is generated by electron transport complexes of the respiratory chain. ATP synthase complex consist of a soluble F(1) head domain - the catalytic core - and a membrane F(1) domain - the membrane proton channel. These two domains are linked by a central stalk rotating inside the F(1) region and a stationary peripheral stalk. During catalysis, ATP synthesis in the catalytic domain of F(1) is coupled via a rotary mechanism of the central stalk subunits to proton translocation. In vivo, can only synthesize ATP although its ATP hydrolase activity can be activated artificially in vitro. Part of the complex F(0) domain. The sequence is that of ATP synthase F(0) complex subunit 8 from Lycodon semicarinatus (Ryukyu odd-tooth snake).